Consider the following 934-residue polypeptide: Serine/threonine-protein kinase PknD (934 aa).

Positions 4–296 (YELIRLIGKG…ELRQALQPYL (293 aa)) constitute a Protein kinase domain. Residues 10–18 (IGKGGMGEV) and K33 each bind ATP. D138 functions as the Proton acceptor in the catalytic mechanism.

The protein belongs to the protein kinase superfamily. Ser/Thr protein kinase family. As to quaternary structure, interacts with Pkn1. Post-translationally, autophosphorylated on serine and threonine residues. Present in elementary bodies 40 hours post-infection as 2 bands of approximately 55 to 60 and 45 to 50 kDa, which may be due to differential phosphorylation as well as degradation; an enzymatically active full-length protein can also be detected.

It catalyses the reaction L-seryl-[protein] + ATP = O-phospho-L-seryl-[protein] + ADP + H(+). The catalysed reaction is L-threonyl-[protein] + ATP = O-phospho-L-threonyl-[protein] + ADP + H(+). Functionally, together with the serine/threonine kinase Pkn1, may play a role in the specific interactions with host proteins during intracellular growth. Autophosphorylates and also phosphorylates Pkn1. The chain is Serine/threonine-protein kinase PknD from Chlamydia trachomatis serovar L2 (strain ATCC VR-902B / DSM 19102 / 434/Bu).